Here is a 132-residue protein sequence, read N- to C-terminus: Small ribosomal subunit protein uS8 (132 aa).

The protein belongs to the universal ribosomal protein uS8 family. In terms of assembly, part of the 30S ribosomal subunit. Contacts proteins S5 and S12.

One of the primary rRNA binding proteins, it binds directly to 16S rRNA central domain where it helps coordinate assembly of the platform of the 30S subunit. The protein is Small ribosomal subunit protein uS8 of Bacillus cytotoxicus (strain DSM 22905 / CIP 110041 / 391-98 / NVH 391-98).